The primary structure comprises 81 residues: ATP synthase subunit c, chloroplastic (81 aa).

2 helical membrane-spanning segments follow: residues 7–27 and 57–77; these read AASV…PGIG and LAFM…LLFA.

Belongs to the ATPase C chain family. F-type ATPases have 2 components, F(1) - the catalytic core - and F(0) - the membrane proton channel. F(1) has five subunits: alpha(3), beta(3), gamma(1), delta(1), epsilon(1). F(0) has four main subunits: a(1), b(1), b'(1) and c(10-14). The alpha and beta chains form an alternating ring which encloses part of the gamma chain. F(1) is attached to F(0) by a central stalk formed by the gamma and epsilon chains, while a peripheral stalk is formed by the delta, b and b' chains.

The protein resides in the plastid. Its subcellular location is the chloroplast thylakoid membrane. Functionally, f(1)F(0) ATP synthase produces ATP from ADP in the presence of a proton or sodium gradient. F-type ATPases consist of two structural domains, F(1) containing the extramembraneous catalytic core and F(0) containing the membrane proton channel, linked together by a central stalk and a peripheral stalk. During catalysis, ATP synthesis in the catalytic domain of F(1) is coupled via a rotary mechanism of the central stalk subunits to proton translocation. Its function is as follows. Key component of the F(0) channel; it plays a direct role in translocation across the membrane. A homomeric c-ring of between 10-14 subunits forms the central stalk rotor element with the F(1) delta and epsilon subunits. This is ATP synthase subunit c, chloroplastic from Pelargonium hortorum (Common geranium).